The primary structure comprises 97 residues: Co-chaperonin GroES (97 aa).

It belongs to the GroES chaperonin family. In terms of assembly, heptamer of 7 subunits arranged in a ring. Interacts with the chaperonin GroEL.

It localises to the cytoplasm. Functionally, together with the chaperonin GroEL, plays an essential role in assisting protein folding. The GroEL-GroES system forms a nano-cage that allows encapsulation of the non-native substrate proteins and provides a physical environment optimized to promote and accelerate protein folding. GroES binds to the apical surface of the GroEL ring, thereby capping the opening of the GroEL channel. In Klebsiella aerogenes (Enterobacter aerogenes), this protein is Co-chaperonin GroES.